The primary structure comprises 222 residues: Small ribosomal subunit protein uS7m (222 aa).

The transit peptide at 1–14 directs the protein to the mitochondrion; sequence MSKKLANFAQKRWI.

This sequence belongs to the universal ribosomal protein uS7 family. Component of the mitochondrial ribosome small subunit (28S) which comprises a 12S rRNA and about 30 distinct proteins.

The protein localises to the mitochondrion. The polypeptide is Small ribosomal subunit protein uS7m (mrps-7) (Caenorhabditis briggsae).